The chain runs to 302 residues: tRNA dimethylallyltransferase (302 aa).

Residue 2–9 participates in ATP binding; the sequence is GPTACGKS. Residue 4–9 participates in substrate binding; it reads TACGKS. Interaction with substrate tRNA regions lie at residues 27–30 and 149–153; these read DSAL and QRLIR.

This sequence belongs to the IPP transferase family. As to quaternary structure, monomer. Requires Mg(2+) as cofactor.

The enzyme catalyses adenosine(37) in tRNA + dimethylallyl diphosphate = N(6)-dimethylallyladenosine(37) in tRNA + diphosphate. Its function is as follows. Catalyzes the transfer of a dimethylallyl group onto the adenine at position 37 in tRNAs that read codons beginning with uridine, leading to the formation of N6-(dimethylallyl)adenosine (i(6)A). The sequence is that of tRNA dimethylallyltransferase from Buchnera aphidicola subsp. Acyrthosiphon pisum (strain 5A).